The sequence spans 602 residues: Chaperone protein DnaK (602 aa).

T199 is modified (phosphothreonine; by autocatalysis).

The protein belongs to the heat shock protein 70 family.

Acts as a chaperone. In Carsonella ruddii (strain PV), this protein is Chaperone protein DnaK.